We begin with the raw amino-acid sequence, 174 residues long: N5-carboxyaminoimidazole ribonucleotide mutase (174 aa).

Substrate-binding residues include Ser16, Asp19, and Arg46.

This sequence belongs to the AIR carboxylase family. Class I subfamily.

The enzyme catalyses 5-carboxyamino-1-(5-phospho-D-ribosyl)imidazole + H(+) = 5-amino-1-(5-phospho-D-ribosyl)imidazole-4-carboxylate. It functions in the pathway purine metabolism; IMP biosynthesis via de novo pathway; 5-amino-1-(5-phospho-D-ribosyl)imidazole-4-carboxylate from 5-amino-1-(5-phospho-D-ribosyl)imidazole (N5-CAIR route): step 2/2. Catalyzes the conversion of N5-carboxyaminoimidazole ribonucleotide (N5-CAIR) to 4-carboxy-5-aminoimidazole ribonucleotide (CAIR). This chain is N5-carboxyaminoimidazole ribonucleotide mutase, found in Mycobacterium tuberculosis (strain CDC 1551 / Oshkosh).